Consider the following 113-residue polypeptide: Replication initiation control protein YabA (113 aa).

Positions 86, 88, 102, and 105 each coordinate Zn(2+).

It belongs to the YabA family. Homotetramer. Interacts with both DnaA and DnaN, acting as a bridge between these two proteins. Zn(2+) serves as cofactor.

The protein localises to the cytoplasm. It is found in the nucleoid. In terms of biological role, involved in control of chromosome replication initiation. Inhibits the cooperative binding of DnaA to the oriC region, thus negatively regulating initiation of chromosome replication. Inhibits the ability of DnaA-ATP to form a helix on DNA; does not disassemble preformed DnaA-DNA helices. Decreases the residence time of DnaA on the chromosome at its binding sites (oriC, replication forks and promoter-binding sites). Tethers DnaA to the replication machinery via the DNA polymerase beta sliding clamp subunit (dnaN). Associates with oriC and other DnaA targets on the chromosome in a DnaA-dependent manner. The sequence is that of Replication initiation control protein YabA from Pediococcus pentosaceus (strain ATCC 25745 / CCUG 21536 / LMG 10740 / 183-1w).